A 95-amino-acid chain; its full sequence is HssA/B-like protein 45 (95 aa).

The segment at 1 to 31 is disordered; sequence MTLFSSISSISNPMTSSKSSIASFGSGTSMS.

Belongs to the hssA/B family.

The protein is HssA/B-like protein 45 (hssl45) of Dictyostelium discoideum (Social amoeba).